We begin with the raw amino-acid sequence, 212 residues long: Membrane-bound lytic murein transglycosylase E (212 aa).

Belongs to the transglycosylase Slt family.

It catalyses the reaction Exolytic cleavage of the (1-&gt;4)-beta-glycosidic linkage between N-acetylmuramic acid (MurNAc) and N-acetylglucosamine (GlcNAc) residues in peptidoglycan, from either the reducing or the non-reducing ends of the peptidoglycan chains, with concomitant formation of a 1,6-anhydrobond in the MurNAc residue.. Its function is as follows. Murein-degrading enzyme. May play a role in recycling of muropeptides during cell elongation and/or cell division. The chain is Membrane-bound lytic murein transglycosylase E (mltE) from Buchnera aphidicola subsp. Baizongia pistaciae (strain Bp).